The sequence spans 156 residues: Pre-mRNA-splicing factor SNT309 (156 aa).

As to quaternary structure, associated with the spliceosome.

The protein resides in the nucleus. Involved in pre-mRNA splicing. This chain is Pre-mRNA-splicing factor SNT309 (SNT309), found in Candida glabrata (strain ATCC 2001 / BCRC 20586 / JCM 3761 / NBRC 0622 / NRRL Y-65 / CBS 138) (Yeast).